Here is a 357-residue protein sequence, read N- to C-terminus: uncharacterized protein (357 aa).

An HEAT repeat occupies 173–211 (VLPILEKLMQDESLYVRKSVANNLNDISKTHPHLLRKVA).

This is an uncharacterized protein from Bacillus subtilis (strain 168).